The sequence spans 183 residues: NAD(P)H-quinone oxidoreductase subunit I, chloroplastic (183 aa).

2 consecutive 4Fe-4S ferredoxin-type domains span residues 55–84 (GRIH…VDWE) and 95–124 (TSYS…MTEE). [4Fe-4S] cluster contacts are provided by cysteine 64, cysteine 67, cysteine 70, cysteine 74, cysteine 104, cysteine 107, cysteine 110, and cysteine 114.

Belongs to the complex I 23 kDa subunit family. As to quaternary structure, NDH is composed of at least 16 different subunits, 5 of which are encoded in the nucleus. [4Fe-4S] cluster serves as cofactor.

The protein localises to the plastid. It localises to the chloroplast thylakoid membrane. It carries out the reaction a plastoquinone + NADH + (n+1) H(+)(in) = a plastoquinol + NAD(+) + n H(+)(out). The enzyme catalyses a plastoquinone + NADPH + (n+1) H(+)(in) = a plastoquinol + NADP(+) + n H(+)(out). Its function is as follows. NDH shuttles electrons from NAD(P)H:plastoquinone, via FMN and iron-sulfur (Fe-S) centers, to quinones in the photosynthetic chain and possibly in a chloroplast respiratory chain. The immediate electron acceptor for the enzyme in this species is believed to be plastoquinone. Couples the redox reaction to proton translocation, and thus conserves the redox energy in a proton gradient. The polypeptide is NAD(P)H-quinone oxidoreductase subunit I, chloroplastic (Huperzia lucidula (Shining clubmoss)).